Consider the following 170-residue polypeptide: ATP synthase subunit b (170 aa).

Residues 22 to 44 (IINLAVVVFGLYKFLPGFLGKIL) traverse the membrane as a helical segment.

Belongs to the ATPase B chain family. In terms of assembly, F-type ATPases have 2 components, F(1) - the catalytic core - and F(0) - the membrane proton channel. F(1) has five subunits: alpha(3), beta(3), gamma(1), delta(1), epsilon(1). F(0) has four main subunits: a(1), b(1), b'(1) and c(10-14). The alpha and beta chains form an alternating ring which encloses part of the gamma chain. F(1) is attached to F(0) by a central stalk formed by the gamma and epsilon chains, while a peripheral stalk is formed by the delta, b and b' chains.

The protein localises to the cellular thylakoid membrane. Its function is as follows. F(1)F(0) ATP synthase produces ATP from ADP in the presence of a proton or sodium gradient. F-type ATPases consist of two structural domains, F(1) containing the extramembraneous catalytic core and F(0) containing the membrane proton channel, linked together by a central stalk and a peripheral stalk. During catalysis, ATP synthesis in the catalytic domain of F(1) is coupled via a rotary mechanism of the central stalk subunits to proton translocation. Component of the F(0) channel, it forms part of the peripheral stalk, linking F(1) to F(0). This is ATP synthase subunit b from Prochlorococcus marinus (strain NATL1A).